The primary structure comprises 193 residues: ATP-dependent Clp protease proteolytic subunit 2 (193 aa).

Residue Ser-98 is the Nucleophile of the active site. Residue His-123 is part of the active site.

It belongs to the peptidase S14 family. In terms of assembly, fourteen ClpP subunits assemble into 2 heptameric rings which stack back to back to give a disk-like structure with a central cavity, resembling the structure of eukaryotic proteasomes.

It localises to the cytoplasm. It carries out the reaction Hydrolysis of proteins to small peptides in the presence of ATP and magnesium. alpha-casein is the usual test substrate. In the absence of ATP, only oligopeptides shorter than five residues are hydrolyzed (such as succinyl-Leu-Tyr-|-NHMec, and Leu-Tyr-Leu-|-Tyr-Trp, in which cleavage of the -Tyr-|-Leu- and -Tyr-|-Trp bonds also occurs).. In terms of biological role, cleaves peptides in various proteins in a process that requires ATP hydrolysis. Has a chymotrypsin-like activity. Plays a major role in the degradation of misfolded proteins. This is ATP-dependent Clp protease proteolytic subunit 2 from Bacillus anthracis.